Reading from the N-terminus, the 1009-residue chain is Protein naked cuticle (1009 aa).

Composition is skewed to polar residues over residues I68 to K83 and L121 to S130. Positions I68 to G166 are disordered. Residues Q152–G166 show a composition bias toward low complexity. The tract at residues E206–S282 is interaction with dsh. One can recognise an EF-hand domain in the interval K217–S253. Disordered stretches follow at residues M328–L433, A456–D479, and G515–R580. The segment covering R349–L359 has biased composition (basic residues). The segment covering N370–A387 has biased composition (basic and acidic residues). Residues K403–Y414 show a composition bias toward basic residues. Over residues G515–H525 the composition is skewed to polar residues. Low complexity-rich tracts occupy residues L526 to Q535 and H570 to R580. The segment at E584–N613 is required for nuclear localization and inhibition of Wnt signaling. 4 disordered regions span residues N619–S662, S773–K799, L835–S899, and T955–S982. Low complexity-rich tracts occupy residues R624 to R638 and S653 to S662. The span at R843–Q857 shows a compositional bias: basic residues. Low complexity predominate over residues Q858 to Q875. Acidic residues predominate over residues E968–L979.

It belongs to the NKD family. Interacts with dsh.

It localises to the cell membrane. Its subcellular location is the cytoplasm. The protein resides in the nucleus. Functionally, cell autonomous antagonist of the canonical Wnt signaling pathway. May activate a second Wnt signaling pathway that controls planar cell polarity. Required for neuroblast specification. This chain is Protein naked cuticle, found in Drosophila pseudoobscura pseudoobscura (Fruit fly).